A 187-amino-acid chain; its full sequence is Ribosome-recycling factor (187 aa).

It belongs to the RRF family.

It is found in the cytoplasm. In terms of biological role, responsible for the release of ribosomes from messenger RNA at the termination of protein biosynthesis. May increase the efficiency of translation by recycling ribosomes from one round of translation to another. The sequence is that of Ribosome-recycling factor from Flavobacterium psychrophilum (strain ATCC 49511 / DSM 21280 / CIP 103535 / JIP02/86).